We begin with the raw amino-acid sequence, 445 residues long: MASMPKPNQSARGRVTVVLGSQWGDEGKGKLTDMLAGEMDICARCAGGNNAGHTIVANSGPDNVKTKFDFHLLPSGLVNPKCIGFIGSGVVMHVPSFFSELDTIEKKGLKCDNRLFVSDRTHLVFDFHQVVDGLKEVELGGSSIGTTKKGIGPAYSSKASRSGLRVHHLYDFDTFAAKFRKLVEGRFKRYGNFEYDTEGEIARYRAFAERLRPFVVDGVTFIHSMLSSNRRVLVEGANALMLDLDYGTYPFVTSSSTGIGGVCTGLGIPPQCIGGVIGVMKAYTSRVGAGPFPTELNDEIMTHLQEVGAEYGTTTGRRRRCGWLDLVMMRYSCLINGYTCLNLTKLDVLDNLPEIKVATTYMLGDKELSSFPADLNILAKVDVQYKTFKGWRGPISNCTSYEQLPDTCREYIEFIENFLGVHIEWIGVGPGREAMVHRPLPPHEM.

Residues 24–30 and 52–54 contribute to the GTP site; these read GDEGKGK and GHT. Asp25 functions as the Proton acceptor in the catalytic mechanism. Mg(2+)-binding residues include Asp25 and Gly52. Residues 25-28, 50-53, Thr147, Arg161, Asn238, Thr253, and Arg317 contribute to the IMP site; these read DEGK and NAGH. Catalysis depends on His53, which acts as the Proton donor. 313–319 contributes to the substrate binding site; it reads TTTGRRR. GTP-binding positions include Arg319, 345–347, and 427–429; these read KLD and GVG.

It belongs to the adenylosuccinate synthetase family. As to quaternary structure, homodimer. Mg(2+) is required as a cofactor.

The protein resides in the cytoplasm. It carries out the reaction IMP + L-aspartate + GTP = N(6)-(1,2-dicarboxyethyl)-AMP + GDP + phosphate + 2 H(+). Its pathway is purine metabolism; AMP biosynthesis via de novo pathway; AMP from IMP: step 1/2. Its function is as follows. Plays an important role in the de novo pathway and in the salvage pathway of purine nucleotide biosynthesis. Catalyzes the first committed step in the biosynthesis of AMP from IMP. This chain is Adenylosuccinate synthetase, found in Malassezia globosa (strain ATCC MYA-4612 / CBS 7966) (Dandruff-associated fungus).